We begin with the raw amino-acid sequence, 295 residues long: NAD kinase (295 aa).

The Proton acceptor role is filled by D74. NAD(+) is bound by residues 74–75 (DG), 148–149 (ND), H159, R176, D178, and 189–194 (TAYALS).

This sequence belongs to the NAD kinase family. It depends on a divalent metal cation as a cofactor.

The protein resides in the cytoplasm. It catalyses the reaction NAD(+) + ATP = ADP + NADP(+) + H(+). Its function is as follows. Involved in the regulation of the intracellular balance of NAD and NADP, and is a key enzyme in the biosynthesis of NADP. Catalyzes specifically the phosphorylation on 2'-hydroxyl of the adenosine moiety of NAD to yield NADP. This chain is NAD kinase, found in Legionella pneumophila (strain Paris).